A 293-amino-acid polypeptide reads, in one-letter code: 3-hydroxybutyrate-oligomer hydrolase (293 aa).

It belongs to the AB hydrolase superfamily.

The protein localises to the cytoplasm. The enzyme catalyses (3R)-hydroxybutanoate pentamer + H2O = (3R)-hydroxybutanoate tetramer + (R)-3-hydroxybutanoate + H(+). It catalyses the reaction (3R)-hydroxybutanoate tetramer + H2O = (3R)-hydroxybutanoate trimer + (R)-3-hydroxybutanoate + H(+). The catalysed reaction is (3R)-hydroxybutanoate trimer + H2O = (3R)-hydroxybutanoate dimer + (R)-3-hydroxybutanoate + H(+). It carries out the reaction (3R)-hydroxybutanoate dimer + H2O = 2 (R)-3-hydroxybutanoate + H(+). The enzyme catalyses [(3R)-hydroxybutanoate](n) + H2O = [(3R)-hydroxybutanoate](n-1) + (R)-3-hydroxybutanoate + H(+). Functionally, catalyzes the degradation of various 3-hydroxybutyrate (3HB) oligomers at a high specific activity and artificial amorphous poly(3-hydroxybutyrate) (PHB) at a lower specific activity. Hydrolyzes the 3HB pentamer most efficiently than the tetramer, trimer and dimer. Does not hydrolyze native PHB granules and semicrystalline PHB. Participates in the mobilization of PHB along with other hydrolases. This chain is 3-hydroxybutyrate-oligomer hydrolase, found in Cupriavidus necator (strain ATCC 17699 / DSM 428 / KCTC 22496 / NCIMB 10442 / H16 / Stanier 337) (Ralstonia eutropha).